Here is a 416-residue protein sequence, read N- to C-terminus: Protein LAZY 1 (416 aa).

A helical membrane pass occupies residues 63–83 (FTFGGSGLLTIGTLGIAAVAI). The IGT motif signature appears at 69–75 (GLLTIGT). Disordered stretches follow at residues 266–306 (AAAA…GMPA) and 337–361 (KKSR…DGPL). Residues 270–282 (GVGGDRAGKGGGY) are compositionally biased toward gly residues. The short motif at 278-295 (KGGGYKTMKKRKVKDEKG) is the Nuclear localization signal element.

It belongs to the LAZY family. As to expression, expressed specifically in the cells at the inner side of the vascular bundles of young leaf sheaths and peripheral cylinders of vascular bundles in the unelongated stems. Expressed in the leaf sheath pulvinus and the lamina joint.

It is found in the cell membrane. The protein localises to the nucleus. Functionally, involved in the regulation of shoot gravitropism and tiller angle through negative regulation of basipetal polar auxin transport (PAT). Acts as positive regulator of lateral auxin transport. Promotes vertical shoot growth. LAZY1 and TAC1 play opposite functions in the regulation of tiller growth angle. This is Protein LAZY 1 from Oryza sativa subsp. japonica (Rice).